Consider the following 488-residue polypeptide: Protein nucleotidyltransferase YdiU (488 aa).

The ATP site is built by Gly-91, Gly-93, Arg-94, Lys-114, Asp-126, Gly-127, Arg-177, and Arg-184. Asp-253 functions as the Proton acceptor in the catalytic mechanism. Asn-254 and Asp-263 together coordinate Mg(2+). Asp-263 provides a ligand contact to ATP.

This sequence belongs to the SELO family. It depends on Mg(2+) as a cofactor. The cofactor is Mn(2+).

The catalysed reaction is L-seryl-[protein] + ATP = 3-O-(5'-adenylyl)-L-seryl-[protein] + diphosphate. It catalyses the reaction L-threonyl-[protein] + ATP = 3-O-(5'-adenylyl)-L-threonyl-[protein] + diphosphate. It carries out the reaction L-tyrosyl-[protein] + ATP = O-(5'-adenylyl)-L-tyrosyl-[protein] + diphosphate. The enzyme catalyses L-histidyl-[protein] + UTP = N(tele)-(5'-uridylyl)-L-histidyl-[protein] + diphosphate. The catalysed reaction is L-seryl-[protein] + UTP = O-(5'-uridylyl)-L-seryl-[protein] + diphosphate. It catalyses the reaction L-tyrosyl-[protein] + UTP = O-(5'-uridylyl)-L-tyrosyl-[protein] + diphosphate. Nucleotidyltransferase involved in the post-translational modification of proteins. It can catalyze the addition of adenosine monophosphate (AMP) or uridine monophosphate (UMP) to a protein, resulting in modifications known as AMPylation and UMPylation. The sequence is that of Protein nucleotidyltransferase YdiU from Bacillus cereus (strain AH187).